Reading from the N-terminus, the 64-residue chain is Putative neurotoxin-G (64 aa).

The first 19 residues, 1–19, serve as a signal peptide directing secretion; it reads MFAMVTVTVLLLISSGIFC. Cystine bridges form between Cys25–Cys45, Cys32–Cys54, and Cys36–Cys56.

In terms of tissue distribution, expressed by the venom gland.

Its subcellular location is the secreted. This Lychas mucronatus (Chinese swimming scorpion) protein is Putative neurotoxin-G.